We begin with the raw amino-acid sequence, 105 residues long: Early nodulin-93 (105 aa).

Residues Thr66–Val83 traverse the membrane as a helical segment.

The protein resides in the membrane. The protein is Early nodulin-93 of Glycine max (Soybean).